The sequence spans 181 residues: ATP-dependent protease subunit HslV (181 aa).

Residue threonine 7 is part of the active site. Positions 162, 165, and 168 each coordinate Na(+).

This sequence belongs to the peptidase T1B family. HslV subfamily. As to quaternary structure, a double ring-shaped homohexamer of HslV is capped on each side by a ring-shaped HslU homohexamer. The assembly of the HslU/HslV complex is dependent on binding of ATP.

It localises to the cytoplasm. The enzyme catalyses ATP-dependent cleavage of peptide bonds with broad specificity.. Its activity is regulated as follows. Allosterically activated by HslU binding. In terms of biological role, protease subunit of a proteasome-like degradation complex believed to be a general protein degrading machinery. In Coxiella burnetii (strain Dugway 5J108-111), this protein is ATP-dependent protease subunit HslV.